Reading from the N-terminus, the 1102-residue chain is GPI inositol-deacylase (1102 aa).

Residues 1–90 (MHRRSSGSPV…NPPDCKSSSV (90 aa)) form a disordered region. Residues 58 to 70 (GASTPRSRNSSMW) show a composition bias toward polar residues. N-linked (GlcNAc...) asparagine glycosylation is present at asparagine 66. Residues 72–83 (TPPSSSMTSNPP) are compositionally biased toward low complexity. The helical transmembrane segment at 121–141 (PCSILTAFTTLVASIFLFFIL) threads the bilayer. Residue serine 308 is part of the active site. The next 2 membrane-spanning stretches (helical) occupy residues 744–764 (LVMRYRTVFAAFPLLVVALVM) and 790–810 (SSLPMLLLAMSLLASSLATST). Asparagine 824 carries N-linked (GlcNAc...) asparagine glycosylation. The next 6 membrane-spanning stretches (helical) occupy residues 867–887 (VALALIFLLTSIYGFLRSKSG), 914–934 (ILLALVSTVIPYQFAYMVACI), 964–984 (SIFLLMLWILPINALVLLVWA), 1001–1021 (VLSIMPFVLLVEAMTTGTMIP), 1033–1053 (MLFFFIAIYSAIYGVSYAYLL), and 1056–1076 (LTNILAAWLVGIYFSASGFSL).

The protein belongs to the GPI inositol-deacylase family.

It localises to the endoplasmic reticulum membrane. In terms of biological role, involved in inositol deacylation of GPI-anchored proteins which plays important roles in the quality control and ER-associated degradation of GPI-anchored proteins. This Aspergillus oryzae (strain ATCC 42149 / RIB 40) (Yellow koji mold) protein is GPI inositol-deacylase (bst1).